The primary structure comprises 208 residues: Guanylate kinase (208 aa).

Residues Gly-4–Gln-185 enclose the Guanylate kinase-like domain. Ala-11 to Ser-18 is an ATP binding site.

The protein belongs to the guanylate kinase family.

The protein localises to the cytoplasm. The catalysed reaction is GMP + ATP = GDP + ADP. In terms of biological role, essential for recycling GMP and indirectly, cGMP. The sequence is that of Guanylate kinase from Haemophilus influenzae (strain 86-028NP).